The sequence spans 575 residues: Delta-selinene-like synthase, chloroplastic (575 aa).

Positions 288, 325, 329, 466, and 469 each coordinate (2E,6E)-farnesyl diphosphate. Aspartate 325 and aspartate 329 together coordinate Mg(2+). Residues 325–329 (DDLYD) carry the DDXXD motif motif. Residues aspartate 469 and glutamate 477 each contribute to the Mg(2+) site.

The protein belongs to the terpene synthase family. Tpsb subfamily. In terms of assembly, monomer. Requires Mg(2+) as cofactor. Mn(2+) is required as a cofactor.

Its subcellular location is the plastid. The protein localises to the chloroplast. The enzyme catalyses (2E,6E)-farnesyl diphosphate = (+)-delta-selinene + diphosphate. Its pathway is secondary metabolite biosynthesis; terpenoid biosynthesis. It participates in terpene metabolism; oleoresin biosynthesis. Its function is as follows. Sesquiterpene synthase (sesqui-TPS) involved in the biosynthesis of sesquiterpene natural products. Catalyzes the conversion of (2E)-geranyl diphosphate (GPP) into delta-selinene. This is Delta-selinene-like synthase, chloroplastic from Picea sitchensis (Sitka spruce).